Consider the following 392-residue polypeptide: Fasciculation and elongation protein zeta-1 (392 aa).

Residues 1–36 (MEAPLVSLDEEFEDIRPSCTEEPEEKPQCLYGTSPH) form a disordered region. Ser-58 is subject to Phosphoserine. A disordered region spans residues 175-196 (MQNSPDPEEEEEVLEEEDGGEI). Residues 180-194 (DPEEEEEVLEEEDGG) are compositionally biased toward acidic residues. A coiled-coil region spans residues 230-298 (SELTELLDRV…KKRRKEKGLS (69 aa)). Residues Ser-298 and Ser-316 each carry the phosphoserine modification.

It belongs to the zygin family. In terms of assembly, homodimer. Interacts with the NH2-terminal variable region (V1) of PKC zeta and weakly with that of PKC epsilon. Interacts with UBE4B and SAP30L. Interacts with SCOC and ULK1; SCOC interferes with ULK1-binding to FEZ1. Directly interacts with SCOC and UVRAG. Stabilizes the interaction between SCOC and UVRAG during amino acid starvation. Phosphorylated by protein kinase C zeta; which enhances interaction with UBE4B and polyubiquitination. Post-translationally, polyubiquitinated in a UBE4B-dependent manner; which does not lead to proteasomal degradation and may be important for neurogenic activity. Polyubiquitin linkage seems to be mainly through Lys-26.

It is found in the cytoplasm. It localises to the cytoskeleton. The protein localises to the microtubule organizing center. The protein resides in the centrosome. Its subcellular location is the cell membrane. Its function is as follows. May be involved in axonal outgrowth as component of the network of molecules that regulate cellular morphology and axon guidance machinery. May participate in the transport of mitochondria and other cargos along microtubules. This Mus musculus (Mouse) protein is Fasciculation and elongation protein zeta-1 (Fez1).